The following is a 142-amino-acid chain: Hemoglobin subunit alpha (142 aa).

Positions V2–R142 constitute a Globin domain. S4 carries the phosphoserine modification. K8 and K12 each carry N6-succinyllysine. An N6-acetyllysine; alternate modification is found at K17. The residue at position 17 (K17) is an N6-succinyllysine; alternate. Y25 bears the Phosphotyrosine mark. Position 36 is a phosphoserine (S36). K41 carries the post-translational modification N6-succinyllysine. S50 bears the Phosphoserine mark. An O2-binding site is contributed by H59. H88 contributes to the heme b binding site. Residue T109 is modified to Phosphothreonine. Residues S125 and S132 each carry the phosphoserine modification. Phosphothreonine is present on residues T135 and T138. The residue at position 139 (S139) is a Phosphoserine.

The protein belongs to the globin family. In terms of assembly, heterotetramer of two alpha chains and two beta chains. As to expression, red blood cells.

Its function is as follows. Involved in oxygen transport from the lung to the various peripheral tissues. Functionally, hemopressin acts as an antagonist peptide of the cannabinoid receptor CNR1. Hemopressin-binding efficiently blocks cannabinoid receptor CNR1 and subsequent signaling. This chain is Hemoglobin subunit alpha (HBA), found in Cricetomys gambianus (Northern giant pouched rat).